The sequence spans 280 residues: 2,3,4,5-tetrahydropyridine-2,6-dicarboxylate N-succinyltransferase (280 aa).

The protein belongs to the transferase hexapeptide repeat family.

It is found in the cytoplasm. The catalysed reaction is (S)-2,3,4,5-tetrahydrodipicolinate + succinyl-CoA + H2O = (S)-2-succinylamino-6-oxoheptanedioate + CoA. The protein operates within amino-acid biosynthesis; L-lysine biosynthesis via DAP pathway; LL-2,6-diaminopimelate from (S)-tetrahydrodipicolinate (succinylase route): step 1/3. This chain is 2,3,4,5-tetrahydropyridine-2,6-dicarboxylate N-succinyltransferase, found in Methylorubrum extorquens (strain PA1) (Methylobacterium extorquens).